The following is a 341-amino-acid chain: 4-hydroxythreonine-4-phosphate dehydrogenase (341 aa).

T126 contributes to the substrate binding site. H161, H206, and H272 together coordinate a divalent metal cation. Residues K280, N289, and R298 each contribute to the substrate site.

It belongs to the PdxA family. In terms of assembly, homodimer. Requires a divalent metal cation as cofactor.

It localises to the cytoplasm. It carries out the reaction 4-(phosphooxy)-L-threonine + NAD(+) = 3-amino-2-oxopropyl phosphate + CO2 + NADH. It participates in cofactor biosynthesis; pyridoxine 5'-phosphate biosynthesis; pyridoxine 5'-phosphate from D-erythrose 4-phosphate: step 4/5. Catalyzes the NAD(P)-dependent oxidation of 4-(phosphooxy)-L-threonine (HTP) into 2-amino-3-oxo-4-(phosphooxy)butyric acid which spontaneously decarboxylates to form 3-amino-2-oxopropyl phosphate (AHAP). The polypeptide is 4-hydroxythreonine-4-phosphate dehydrogenase (Thermosynechococcus vestitus (strain NIES-2133 / IAM M-273 / BP-1)).